We begin with the raw amino-acid sequence, 183 residues long: Porphobilinogen deaminase (183 aa).

Belongs to the HMBS family. In terms of assembly, monomer. Dipyrromethane serves as cofactor.

The enzyme catalyses 4 porphobilinogen + H2O = hydroxymethylbilane + 4 NH4(+). The protein operates within porphyrin-containing compound metabolism; protoporphyrin-IX biosynthesis; coproporphyrinogen-III from 5-aminolevulinate: step 2/4. Its function is as follows. Tetrapolymerization of the monopyrrole PBG into the hydroxymethylbilane pre-uroporphyrinogen in several discrete steps. The chain is Porphobilinogen deaminase (hemC) from Yersinia intermedia.